The sequence spans 315 residues: Cell division protein FtsZ (315 aa).

GTP is bound by residues 55-57 (GTG), E98, R102, and D146.

It belongs to the FtsZ family. As to quaternary structure, homodimer. Polymerizes to form a dynamic ring structure in a strictly GTP-dependent manner. Interacts directly with several other division proteins.

It is found in the cytoplasm. Its function is as follows. Essential cell division protein that forms a contractile ring structure (Z ring) at the future cell division site. The regulation of the ring assembly controls the timing and the location of cell division. One of the functions of the FtsZ ring is to recruit other cell division proteins to the septum to produce a new cell wall between the dividing cells. Binds GTP and shows GTPase activity. This chain is Cell division protein FtsZ, found in Wolbachia pipientis.